Consider the following 366-residue polypeptide: tRNA/tmRNA (uracil-C(5))-methyltransferase (366 aa).

S-adenosyl-L-methionine is bound by residues Gln190, Tyr218, Asn223, Glu239, and Asp299. Residue Cys324 is the Nucleophile of the active site. Glu358 (proton acceptor) is an active-site residue.

This sequence belongs to the class I-like SAM-binding methyltransferase superfamily. RNA M5U methyltransferase family. TrmA subfamily.

The catalysed reaction is uridine(54) in tRNA + S-adenosyl-L-methionine = 5-methyluridine(54) in tRNA + S-adenosyl-L-homocysteine + H(+). It catalyses the reaction uridine(341) in tmRNA + S-adenosyl-L-methionine = 5-methyluridine(341) in tmRNA + S-adenosyl-L-homocysteine + H(+). Its function is as follows. Dual-specificity methyltransferase that catalyzes the formation of 5-methyluridine at position 54 (m5U54) in all tRNAs, and that of position 341 (m5U341) in tmRNA (transfer-mRNA). This Klebsiella pneumoniae subsp. pneumoniae (strain ATCC 700721 / MGH 78578) protein is tRNA/tmRNA (uracil-C(5))-methyltransferase.